The chain runs to 377 residues: tRNA-specific 2-thiouridylase MnmA (377 aa).

Residues 22–29 (GMSGGVDS) and M48 each bind ATP. Positions 108 to 110 (NPD) are interaction with target base in tRNA. C113 acts as the Nucleophile in catalysis. Cysteines 113 and 210 form a disulfide. G138 is a binding site for ATP. An interaction with tRNA region spans residues 160–162 (KDQ). Residue C210 is the Cysteine persulfide intermediate of the active site. The segment at 322–323 (RY) is interaction with tRNA.

Belongs to the MnmA/TRMU family.

It localises to the cytoplasm. It carries out the reaction S-sulfanyl-L-cysteinyl-[protein] + uridine(34) in tRNA + AH2 + ATP = 2-thiouridine(34) in tRNA + L-cysteinyl-[protein] + A + AMP + diphosphate + H(+). Its function is as follows. Catalyzes the 2-thiolation of uridine at the wobble position (U34) of tRNA, leading to the formation of s(2)U34. This is tRNA-specific 2-thiouridylase MnmA from Shewanella amazonensis (strain ATCC BAA-1098 / SB2B).